The primary structure comprises 103 residues: UPF0145 protein CYA_2258 (103 aa).

Belongs to the UPF0145 family.

The chain is UPF0145 protein CYA_2258 from Synechococcus sp. (strain JA-3-3Ab) (Cyanobacteria bacterium Yellowstone A-Prime).